The following is a 160-amino-acid chain: Eukaryotic translation initiation factor 5A (160 aa).

Basic and acidic residues predominate over residues 1–13 (MSDSEEHHFESKA). Positions 1 to 22 (MSDSEEHHFESKADAGASKTYP) are disordered. The residue at position 53 (lysine 53) is a Hypusine.

It belongs to the eIF-5A family. In terms of processing, lys-53 undergoes hypusination, a unique post-translational modification that consists in the addition of a butylamino group from spermidine to lysine side chain, leading to the formation of the unusual amino acid hypusine. eIF-5As are the only known proteins to undergo this modification, which is essential for their function.

Functionally, translation factor that promotes translation elongation and termination, particularly upon ribosome stalling at specific amino acid sequence contexts. Binds between the exit (E) and peptidyl (P) site of the ribosome and promotes rescue of stalled ribosome: specifically required for efficient translation of polyproline-containing peptides as well as other motifs that stall the ribosome. Acts as a ribosome quality control (RQC) cofactor by joining the RQC complex to facilitate peptidyl transfer during CAT tailing step. The protein is Eukaryotic translation initiation factor 5A (TIF5A) of Zea mays (Maize).